A 530-amino-acid polypeptide reads, in one-letter code: MARLFTPSESKYYLMALDAGTGSIRAVIFDLEGNQIAVGQAEWRHLAVPDVPGSMEFDLNKNWQLACECMRQALHNAGIAPEYIAAVSACSMREGIVLYNNEGTPIWACANVDARAAREVSELKELHNNTFENEVYRATGQTLALSAIPRLLWLAHHRSDIYRQASTITMISDWLAYMLSGELAVDPSNAGTTGLLDLTTRNWKPALLDMAGLRADILSPVKETGTLLGVVSSQAAELCGLKAGTPVVVGGGDVQLGCLGLGVVRPAQTAVLGGTFWQQVVNLAAPVTDPEMNVRVNPHVIPGMVQAESISFFTGLTMRWFRDAFCAEEKLIAERLGIDTYTLLEEMASRVPPGSWGVMPIFSDRMRFKTWYHAAPSFINLSIDPDKCNKATLFRALEENAAIVSACNLQQIADFSNIHPTSLVFAGGGSKGKLWSQILADVSGLPVNIPVVKEATALGCAIAAGVGAGIFSSMAETGERLVRWERTHTPDPEKHELYQDSRDKWQAVYQDQLGLVDHGLTTSLWKAPGL.

The protein belongs to the FGGY kinase family.

It localises to the cytoplasm. It catalyses the reaction (S)-4,5-dihydroxypentane-2,3-dione + ATP = (2S)-2-hydroxy-3,4-dioxopentyl phosphate + ADP + H(+). Its function is as follows. Catalyzes the phosphorylation of autoinducer-2 (AI-2) to phospho-AI-2, which subsequently inactivates the transcriptional regulator LsrR and leads to the transcription of the lsr operon. Phosphorylates the ring-open form of (S)-4,5-dihydroxypentane-2,3-dione (DPD), which is the precursor to all AI-2 signaling molecules, at the C5 position. The protein is Autoinducer-2 kinase of Escherichia coli (strain ATCC 8739 / DSM 1576 / NBRC 3972 / NCIMB 8545 / WDCM 00012 / Crooks).